A 153-amino-acid chain; its full sequence is UPF0756 membrane protein lin1603 (153 aa).

The next 4 membrane-spanning stretches (helical) occupy residues Met6–Ile26, Trp54–Phe74, Ser80–Ala100, and Leu117–Ile137.

The protein belongs to the UPF0756 family.

The protein resides in the cell membrane. The chain is UPF0756 membrane protein lin1603 from Listeria innocua serovar 6a (strain ATCC BAA-680 / CLIP 11262).